Reading from the N-terminus, the 436-residue chain is Serine carboxypeptidase-like 15 (436 aa).

An N-terminal signal peptide occupies residues 1–24 (MASWIFKLLLLLQCVLVLIQHADS). Disulfide bonds link Cys83/Cys326, Cys247/Cys261, and Cys285/Cys292. Asn104 carries N-linked (GlcNAc...) asparagine glycosylation. Ser179 is a catalytic residue. Asn306 and Asn345 each carry an N-linked (GlcNAc...) asparagine glycan. Asp361 is an active-site residue. N-linked (GlcNAc...) asparagine glycosylation occurs at Asn377. Residue His414 is part of the active site.

Belongs to the peptidase S10 family. Expressed in seedlings and roots.

The protein resides in the secreted. Its function is as follows. Probable carboxypeptidase. This Arabidopsis thaliana (Mouse-ear cress) protein is Serine carboxypeptidase-like 15 (SCPL15).